The following is a 239-amino-acid chain: Probable transcriptional regulatory protein BT9727_0453 (239 aa).

Belongs to the TACO1 family. YeeN subfamily.

The protein localises to the cytoplasm. This Bacillus thuringiensis subsp. konkukian (strain 97-27) protein is Probable transcriptional regulatory protein BT9727_0453.